The following is a 303-amino-acid chain: Protoheme IX farnesyltransferase (303 aa).

A run of 9 helical transmembrane segments spans residues 30 to 50 (VMSL…STVS), 54 to 74 (AMIA…LNMW), 101 to 121 (ALIF…YFAN), 123 to 143 (ISAV…TIWL), 150 to 170 (NIVI…TIAT), 178 to 198 (ITFF…LSLY), 219 to 241 (STKI…PYAI), 245 to 262 (GLVF…YNIL), and 279 to 299 (AKTI…IFLI).

It belongs to the UbiA prenyltransferase family. Protoheme IX farnesyltransferase subfamily.

The protein resides in the cell inner membrane. The enzyme catalyses heme b + (2E,6E)-farnesyl diphosphate + H2O = Fe(II)-heme o + diphosphate. It participates in porphyrin-containing compound metabolism; heme O biosynthesis; heme O from protoheme: step 1/1. Functionally, converts heme B (protoheme IX) to heme O by substitution of the vinyl group on carbon 2 of heme B porphyrin ring with a hydroxyethyl farnesyl side group. The sequence is that of Protoheme IX farnesyltransferase from Pelagibacter ubique (strain HTCC1062).